The following is a 324-amino-acid chain: Phospho-N-acetylmuramoyl-pentapeptide-transferase (324 aa).

The next 10 helical transmembrane spans lie at 5 to 25 (VILF…PIFI), 52 to 72 (PTMG…VMTM), 77 to 97 (VSMN…LGFL), 117 to 137 (LIGQ…QGMP), 147 to 167 (LSFD…VGGS), 176 to 196 (LDGL…ILAW), 203 to 223 (VAIF…FNAH), 227 to 247 (VFMG…IAIL), 250 to 270 (LEIL…SVIL), and 302 to 322 (VVVT…YIEV).

The protein belongs to the glycosyltransferase 4 family. MraY subfamily. Requires Mg(2+) as cofactor.

It localises to the cell membrane. The enzyme catalyses UDP-N-acetyl-alpha-D-muramoyl-L-alanyl-gamma-D-glutamyl-meso-2,6-diaminopimeloyl-D-alanyl-D-alanine + di-trans,octa-cis-undecaprenyl phosphate = di-trans,octa-cis-undecaprenyl diphospho-N-acetyl-alpha-D-muramoyl-L-alanyl-D-glutamyl-meso-2,6-diaminopimeloyl-D-alanyl-D-alanine + UMP. The protein operates within cell wall biogenesis; peptidoglycan biosynthesis. Functionally, catalyzes the initial step of the lipid cycle reactions in the biosynthesis of the cell wall peptidoglycan: transfers peptidoglycan precursor phospho-MurNAc-pentapeptide from UDP-MurNAc-pentapeptide onto the lipid carrier undecaprenyl phosphate, yielding undecaprenyl-pyrophosphoryl-MurNAc-pentapeptide, known as lipid I. The protein is Phospho-N-acetylmuramoyl-pentapeptide-transferase of Bacillus licheniformis (strain ATCC 14580 / DSM 13 / JCM 2505 / CCUG 7422 / NBRC 12200 / NCIMB 9375 / NCTC 10341 / NRRL NRS-1264 / Gibson 46).